The following is an 841-amino-acid chain: Envelope glycoprotein H (841 aa).

An N-terminal signal peptide occupies residues M1–A17. 3 N-linked (GlcNAc...) asparagine; by host glycosylation sites follow: N18, N45, and N217. Residues N18–G802 are Virion surface-facing. Residues D246 to L309 are interaction with gL. N317, N499, N522, N760, and N783 each carry an N-linked (GlcNAc...) asparagine; by host glycan. The chain crosses the membrane as a helical span at residues Q803 to G823. Residues W824–T841 are Intravirion-facing.

It belongs to the herpesviridae glycoprotein H family. As to quaternary structure, interacts with glycoprotein L (gL); this interaction is necessary for the correct processing and cell surface expression of gH. The heterodimer gH/gL seems to interact with gB trimers during fusion. Post-translationally, N-glycosylated, O-glycosylated, and sialylated.

It is found in the virion membrane. It localises to the host cell membrane. Its subcellular location is the host endosome membrane. In terms of biological role, the heterodimer glycoprotein H-glycoprotein L is required for the fusion of viral and plasma membranes leading to virus entry into the host cell. Following initial binding to host receptor, membrane fusion is mediated by the fusion machinery composed of gB and the heterodimer gH/gL. May also be involved in the fusion between the virion envelope and the outer nuclear membrane during virion morphogenesis. This chain is Envelope glycoprotein H, found in Varicella-zoster virus (strain Dumas) (HHV-3).